Here is a 429-residue protein sequence, read N- to C-terminus: Enolase (429 aa).

Q167 contributes to the (2R)-2-phosphoglycerate binding site. The Proton donor role is filled by E209. The Mg(2+) site is built by D246, E289, and D316. (2R)-2-phosphoglycerate contacts are provided by K341, R370, S371, and K392. K341 serves as the catalytic Proton acceptor.

It belongs to the enolase family. Component of the RNA degradosome, a multiprotein complex involved in RNA processing and mRNA degradation. The cofactor is Mg(2+).

It localises to the cytoplasm. Its subcellular location is the secreted. The protein localises to the cell surface. The enzyme catalyses (2R)-2-phosphoglycerate = phosphoenolpyruvate + H2O. Its pathway is carbohydrate degradation; glycolysis; pyruvate from D-glyceraldehyde 3-phosphate: step 4/5. Catalyzes the reversible conversion of 2-phosphoglycerate (2-PG) into phosphoenolpyruvate (PEP). It is essential for the degradation of carbohydrates via glycolysis. This chain is Enolase, found in Pseudomonas aeruginosa (strain LESB58).